Here is an 86-residue protein sequence, read N- to C-terminus: Toxin Cn1 (86 aa).

An N-terminal signal peptide occupies residues 1–19 (MNSLLMITACFVLIGTVWA). The region spanning 20-84 (KDGYLVDAKG…TWPLPNKTCS (65 aa)) is the LCN-type CS-alpha/beta domain. Disulfide bonds link Cys30–Cys83, Cys34–Cys59, Cys43–Cys64, and Cys47–Cys66. Serine amide is present on Ser84.

This sequence belongs to the long (4 C-C) scorpion toxin superfamily. Sodium channel inhibitor family. Beta subfamily. As to expression, expressed by the venom gland.

It localises to the secreted. Functionally, beta toxins bind voltage-independently at site-4 of sodium channels (Nav) and shift the voltage of activation toward more negative potentials thereby affecting sodium channel activation and promoting spontaneous and repetitive firing. This is Toxin Cn1 from Centruroides noxius (Mexican scorpion).